The sequence spans 540 residues: MAVIFSSSALGSHTHVDRHLVRQPIRDLENNVDMLDHLSRVLALSSQYHALGAAIALFACACAYALVAPRQPPKFPAPQLYDETGPIDLIALDKTIKEGFQNYKGKYFTLKEAHGETVILPTKFMEELKALPDNMLNLDDEIDERFLSEYSLFTTTSVGGRISTVVNSIKNELTKTLGNLMGDIHEEVVYSFQELIPPCDDWTELDIQSKLVHIVALVSGRIFVGLPMSRNQEYLDCIIEFTLNVFFAVPEIRAYPRLLRWTSRYLNTKVRAVHKSLATMRRLMAPIIDDTKQQLEMGTGPHNMCAWNIKNSNQKERDSLNIQAQMQLATSMAAIHTTSMTVTNAIFDLAARPEYLQPLRDEFQDLRAIEPLPYLDKTSMPKLRKLDSFLKESHRLSPISLLNMRRKIVQPITLHDGTVLQPGMHIAFPLHQISNDEDLWENPSQFDGFRFQKLRDLPGNESKYQFTATGTNNLDFGHGVHACPGRFFAANEIKMILVHLIDNFDFKFKGDIGRPDSLWTPGGYHPDPSVRVLLKRRLKA.

The helical transmembrane segment at 50–68 (ALGAAIALFACACAYALVA) threads the bilayer. Asn460 carries N-linked (GlcNAc...) asparagine glycosylation. Cys483 is a heme binding site.

Belongs to the cytochrome P450 family. The cofactor is heme.

The protein resides in the membrane. It functions in the pathway sesquiterpene biosynthesis. Functionally, cytochrome P450 monooxygenase; part of the gene cluster that mediates the biosynthesis of PR-toxin, a bicyclic sesquiterpene belonging to the eremophilane class and acting as a mycotoxin. The first step of the pathway is catalyzed by the aristolochene synthase which performs the cyclization of trans,trans-farnesyl diphosphate (FPP) to the bicyclic sesquiterpene aristolochene. Following the formation of aristolochene, the non-oxygenated aristolochene is converted to the trioxygenated intermediate eremofortin B, via 7-epi-neopetasone. This conversion appears to involve three enzymes, a hydroxysterol oxidase-like enzyme, the quinone-oxidase prx3 that forms the quinone-type-structure in the bicyclic nucleus of aristolochene with the C8-oxo group and the C-3 hydroxyl group, and the P450 monooxygenase prx9 that introduces the epoxide at the double bond between carbons 1 and 2. No monoxy or dioxy-intermediates have been reported to be released to the broth, so these three early oxidative reactions may be coupled together. Eremofortin B is further oxidized by another P450 monooxygenase, that introduces a second epoxide between carbons 7 and 11 prior to acetylation to eremofortin A by the acetyltransferase prx11. The second epoxidation may be performed by a second P450 monooxygenase. After the acetylation step, eremofortin A is converted to eremofortin C and then to PR-toxin. First the conversion of eremofortin A to eremofortin C proceeds by oxidation of the side chain of the molecule at C-12 and is catalyzed by the short-chain oxidoreductase prx1. The cytochrome P450 monooxygenase prx8 also plays a role in this step. The primary alcohol formed at C-12 is finally oxidized by the short-chain alcohol dehydrogenase prx4 that forms PR-toxin. The chain is Cytochrome P450 monooxygenase prx8 from Penicillium rubens (strain ATCC 28089 / DSM 1075 / NRRL 1951 / Wisconsin 54-1255) (Penicillium chrysogenum).